Here is a 229-residue protein sequence, read N- to C-terminus: V-type proton ATPase subunit E (229 aa).

Belongs to the V-ATPase E subunit family. As to quaternary structure, V-ATPase is a heteromultimeric enzyme composed of a peripheral catalytic V1 complex (components A to H) attached to an integral membrane V0 proton pore complex (components: a, c, c', c'' and d).

Subunit of the peripheral V1 complex of vacuolar ATPase essential for assembly or catalytic function. V-ATPase is responsible for acidifying a variety of intracellular compartments in eukaryotic cells. In Spinacia oleracea (Spinach), this protein is V-type proton ATPase subunit E (VATE).